The primary structure comprises 503 residues: Maturase K (503 aa).

The protein belongs to the intron maturase 2 family. MatK subfamily.

The protein resides in the plastid. It is found in the chloroplast. Functionally, usually encoded in the trnK tRNA gene intron. Probably assists in splicing its own and other chloroplast group II introns. The protein is Maturase K of Diospyros virginiana (American persimmon).